Consider the following 130-residue polypeptide: Small ribosomal subunit protein uS11 (130 aa).

It belongs to the universal ribosomal protein uS11 family. In terms of assembly, part of the 30S ribosomal subunit. Interacts with proteins S7 and S18. Binds to IF-3.

Functionally, located on the platform of the 30S subunit, it bridges several disparate RNA helices of the 16S rRNA. Forms part of the Shine-Dalgarno cleft in the 70S ribosome. This Xylella fastidiosa (strain M23) protein is Small ribosomal subunit protein uS11.